Here is a 69-residue protein sequence, read N- to C-terminus: Guanine nucleotide-binding protein G(I)/G(S)/G(O) subunit gamma-T2 (69 aa).

Cysteine methyl ester is present on C66. The S-farnesyl cysteine moiety is linked to residue C66. Residues 67-69 constitute a propeptide, removed in mature form; sequence LIS.

This sequence belongs to the G protein gamma family. As to quaternary structure, g proteins are composed of 3 units, alpha, beta and gamma. In terms of tissue distribution, retinal cones.

Its subcellular location is the cell membrane. In terms of biological role, guanine nucleotide-binding proteins (G proteins) are involved as a modulator or transducer in various transmembrane signaling systems. The beta and gamma chains are required for the GTPase activity, for replacement of GDP by GTP, and for G protein-effector interaction. The protein is Guanine nucleotide-binding protein G(I)/G(S)/G(O) subunit gamma-T2 (GNGT2) of Homo sapiens (Human).